The sequence spans 693 residues: Elongation factor G 1 (693 aa).

A tr-type G domain is found at 4-281 (NKLRNIGISA…AVTRFLPSPH (278 aa)). GTP is bound by residues 13-20 (AHIDSGKT), 80-84 (DTPGH), and 134-137 (NKCD).

Belongs to the TRAFAC class translation factor GTPase superfamily. Classic translation factor GTPase family. EF-G/EF-2 subfamily.

The protein localises to the cytoplasm. Catalyzes the GTP-dependent ribosomal translocation step during translation elongation. During this step, the ribosome changes from the pre-translocational (PRE) to the post-translocational (POST) state as the newly formed A-site-bound peptidyl-tRNA and P-site-bound deacylated tRNA move to the P and E sites, respectively. Catalyzes the coordinated movement of the two tRNA molecules, the mRNA and conformational changes in the ribosome. This Borreliella afzelii (strain PKo) (Borrelia afzelii) protein is Elongation factor G 1.